We begin with the raw amino-acid sequence, 130 residues long: Small ribosomal subunit protein uS8 (130 aa).

This sequence belongs to the universal ribosomal protein uS8 family. In terms of assembly, part of the 30S ribosomal subunit. Contacts proteins S5 and S12.

Its function is as follows. One of the primary rRNA binding proteins, it binds directly to 16S rRNA central domain where it helps coordinate assembly of the platform of the 30S subunit. In Yersinia pseudotuberculosis serotype O:1b (strain IP 31758), this protein is Small ribosomal subunit protein uS8.